The primary structure comprises 351 residues: MYSLARPFLFSLDAERAHALALRSIDTAYRTGTTALLARRPVPLPTPAFGLIFPNPVGLGAGLDKNGEHIDALFALGFGFVEIGTVTPRAQEGNPKPRMFRLPEYQAVINRMGFNNLGVDALVANVQRARRTGGLLGINIGKNKDTPNEEATSDYRYCMERVYPLADYITVNISSPNTAGLRELQEEQSLRRLISDLRETQEVLSAPHGKRVPMLVKVAPDLNDRDIDAAARVLADLAVDGVIATNTTVTRTLVANHPLAAEAGGLSGAPLLGQSTLVLRRLRARLPESIPLIGVGGINSGADAVAKMAAGASLVQCYSGLVYRGPQLIGECVNAIRRRREAPSGGAVSPL.

FMN contacts are provided by residues 61 to 65 (AGLDK) and T85. K65 serves as a coordination point for substrate. 110 to 114 (NRMGF) is a binding site for substrate. FMN-binding residues include N139 and N172. N172 serves as a coordination point for substrate. S175 acts as the Nucleophile in catalysis. N177 is a substrate binding site. 2 residues coordinate FMN: K217 and T245. 246–247 (NT) is a substrate binding site. Residues G268, G297, and 318–319 (YS) contribute to the FMN site.

It belongs to the dihydroorotate dehydrogenase family. Type 2 subfamily. As to quaternary structure, monomer. FMN is required as a cofactor.

It is found in the cell membrane. It carries out the reaction (S)-dihydroorotate + a quinone = orotate + a quinol. The protein operates within pyrimidine metabolism; UMP biosynthesis via de novo pathway; orotate from (S)-dihydroorotate (quinone route): step 1/1. Its function is as follows. Catalyzes the conversion of dihydroorotate to orotate with quinone as electron acceptor. This Xanthomonas euvesicatoria pv. vesicatoria (strain 85-10) (Xanthomonas campestris pv. vesicatoria) protein is Dihydroorotate dehydrogenase (quinone).